Reading from the N-terminus, the 304-residue chain is Methionyl-tRNA formyltransferase (304 aa).

Residue 106-109 (SLLP) participates in (6S)-5,6,7,8-tetrahydrofolate binding.

The protein belongs to the Fmt family.

The enzyme catalyses L-methionyl-tRNA(fMet) + (6R)-10-formyltetrahydrofolate = N-formyl-L-methionyl-tRNA(fMet) + (6S)-5,6,7,8-tetrahydrofolate + H(+). Functionally, attaches a formyl group to the free amino group of methionyl-tRNA(fMet). The formyl group appears to play a dual role in the initiator identity of N-formylmethionyl-tRNA by promoting its recognition by IF2 and preventing the misappropriation of this tRNA by the elongation apparatus. The polypeptide is Methionyl-tRNA formyltransferase (Thermosipho africanus (strain TCF52B)).